The primary structure comprises 561 residues: V-type proton ATPase catalytic subunit A (561 aa).

190–197 (GAFGCGKT) contacts ATP.

This sequence belongs to the ATPase alpha/beta chains family. In terms of assembly, V-ATPase is a heteromultimeric enzyme composed of a peripheral catalytic V1 complex (main components: subunits A, B, C, D, E, and F) attached to an integral membrane V0 proton pore complex (main component: the proteolipid protein). As to expression, high expression in the mesocotyl tip of etiolated seedlings compared to the base.

The enzyme catalyses ATP + H2O + 4 H(+)(in) = ADP + phosphate + 5 H(+)(out). Its function is as follows. Catalytic subunit of the peripheral V1 complex of vacuolar ATPase. V-ATPase vacuolar ATPase is responsible for acidifying a variety of intracellular compartments in eukaryotic cells. In Zea mays (Maize), this protein is V-type proton ATPase catalytic subunit A.